The sequence spans 104 residues: Nucleoid-associated protein OB0030 (104 aa).

The segment at 1–23 is disordered; that stretch reads MKGNMNNMMKQMQKMQKKMMQAQ.

It belongs to the YbaB/EbfC family. Homodimer.

Its subcellular location is the cytoplasm. It is found in the nucleoid. Functionally, binds to DNA and alters its conformation. May be involved in regulation of gene expression, nucleoid organization and DNA protection. The sequence is that of Nucleoid-associated protein OB0030 from Oceanobacillus iheyensis (strain DSM 14371 / CIP 107618 / JCM 11309 / KCTC 3954 / HTE831).